Consider the following 230-residue polypeptide: Ribonuclease 3 (230 aa).

Residues Y5 to D125 form the RNase III domain. Position 40 (E40) interacts with Mg(2+). The active site involves D44. Mg(2+) contacts are provided by D111 and E114. E114 is a catalytic residue. Residues D153–Q223 form the DRBM domain.

The protein belongs to the ribonuclease III family. Homodimer. Requires Mg(2+) as cofactor.

It is found in the cytoplasm. It carries out the reaction Endonucleolytic cleavage to 5'-phosphomonoester.. Digests double-stranded RNA. Involved in the processing of primary rRNA transcript to yield the immediate precursors to the large and small rRNAs (23S and 16S). Processes some mRNAs, and tRNAs when they are encoded in the rRNA operon. Processes pre-crRNA and tracrRNA of type II CRISPR loci if present in the organism. The protein is Ribonuclease 3 of Francisella philomiragia subsp. philomiragia (strain ATCC 25017 / CCUG 19701 / FSC 153 / O#319-036).